The sequence spans 165 residues: uncharacterized protein (165 aa).

A signal peptide spans 1–25 (MKRVLFSVIVFTAVGFTFCQSKAHA).

This is an uncharacterized protein from Bacillus subtilis (strain 168).